The chain runs to 332 residues: Ketol-acid reductoisomerase (NADP(+)) (332 aa).

Residues 2-182 enclose the KARI N-terminal Rossmann domain; it reads AKIYTDKDVS…GATRAGVIET (181 aa). NADP(+)-binding positions include 25–28, Ser-53, and 83–86; these read YGSQ and DMIQ. The active site involves His-108. Gly-134 is an NADP(+) binding site. In terms of domain architecture, KARI C-terminal knotted spans 183–328; that stretch reads TFKEETETDL…RSLRDIILRG (146 aa). Positions 191, 195, 227, and 231 each coordinate Mg(2+). Residue Ser-252 coordinates substrate.

The protein belongs to the ketol-acid reductoisomerase family. Mg(2+) is required as a cofactor.

The enzyme catalyses (2R)-2,3-dihydroxy-3-methylbutanoate + NADP(+) = (2S)-2-acetolactate + NADPH + H(+). The catalysed reaction is (2R,3R)-2,3-dihydroxy-3-methylpentanoate + NADP(+) = (S)-2-ethyl-2-hydroxy-3-oxobutanoate + NADPH + H(+). It participates in amino-acid biosynthesis; L-isoleucine biosynthesis; L-isoleucine from 2-oxobutanoate: step 2/4. It functions in the pathway amino-acid biosynthesis; L-valine biosynthesis; L-valine from pyruvate: step 2/4. Functionally, involved in the biosynthesis of branched-chain amino acids (BCAA). Catalyzes an alkyl-migration followed by a ketol-acid reduction of (S)-2-acetolactate (S2AL) to yield (R)-2,3-dihydroxy-isovalerate. In the isomerase reaction, S2AL is rearranged via a Mg-dependent methyl migration to produce 3-hydroxy-3-methyl-2-ketobutyrate (HMKB). In the reductase reaction, this 2-ketoacid undergoes a metal-dependent reduction by NADPH to yield (R)-2,3-dihydroxy-isovalerate. This chain is Ketol-acid reductoisomerase (NADP(+)), found in Sulfolobus acidocaldarius (strain ATCC 33909 / DSM 639 / JCM 8929 / NBRC 15157 / NCIMB 11770).